Here is a 216-residue protein sequence, read N- to C-terminus: Imidazole glycerol phosphate synthase subunit HisH 1 (216 aa).

Residues 4–216 (CVLIVDAGLG…LQNFIALNPC (213 aa)) enclose the Glutamine amidotransferase type-1 domain. Cys84 acts as the Nucleophile in catalysis. Catalysis depends on residues His195 and Glu197.

In terms of assembly, heterodimer of HisH and HisF.

The protein resides in the cytoplasm. The enzyme catalyses 5-[(5-phospho-1-deoxy-D-ribulos-1-ylimino)methylamino]-1-(5-phospho-beta-D-ribosyl)imidazole-4-carboxamide + L-glutamine = D-erythro-1-(imidazol-4-yl)glycerol 3-phosphate + 5-amino-1-(5-phospho-beta-D-ribosyl)imidazole-4-carboxamide + L-glutamate + H(+). It catalyses the reaction L-glutamine + H2O = L-glutamate + NH4(+). It functions in the pathway amino-acid biosynthesis; L-histidine biosynthesis; L-histidine from 5-phospho-alpha-D-ribose 1-diphosphate: step 5/9. Functionally, IGPS catalyzes the conversion of PRFAR and glutamine to IGP, AICAR and glutamate. The HisH subunit provides the glutamine amidotransferase activity that produces the ammonia necessary to HisF for the synthesis of IGP and AICAR. The polypeptide is Imidazole glycerol phosphate synthase subunit HisH 1 (hisH1) (Prochlorococcus marinus (strain MIT 9313)).